The sequence spans 194 residues: Protein PHLOEM PROTEIN 2-LIKE A2 (194 aa).

The helical transmembrane segment at 49–71 (VTFVFFCFFKISLNSAYLYTLYS) threads the bilayer.

As to expression, vascular tissues, specifically in phloem companion cell-sieve element complexes.

It is found in the membrane. This Arabidopsis thaliana (Mouse-ear cress) protein is Protein PHLOEM PROTEIN 2-LIKE A2 (PP2A2).